Here is an 801-residue protein sequence, read N- to C-terminus: Protocadherin beta-8 (801 aa).

A signal peptide spans 1–29 (MEASGKLICRQRQVLFSFLLLGLSLAGAA). Residues 30-691 (EPRSYSVVEE…GQADSLTVYL (662 aa)) lie on the Extracellular side of the membrane. Cadherin domains are found at residues 36-134 (VVEE…SPVF), 139-243 (MLVK…APEF), 248-348 (YRVQ…APEV), 353-452 (FTSP…APAF), and 457-562 (YTLF…SPFV). An intrachain disulfide couples C97 to C103. N-linked (GlcNAc...) asparagine glycosylation is found at N419 and N437. Residue N568 is glycosylated (N-linked (GlcNAc...) asparagine). One can recognise a Cadherin 6 domain in the interval 569-672 (SSAPCTELVP…LVDGFSQPYL (104 aa)). The helical transmembrane segment at 692–710 (VVALASVSSLFLFSVLLFV) threads the bilayer. Residues 711–801 (AVRLCRRSRA…NGFGFSLQLK (91 aa)) lie on the Cytoplasmic side of the membrane.

Forms homodimers in trans (molecules expressed by two different cells). Forms promiscuous heterodimers in cis (at the plasma membrane of the same cell) with other protocadherins.

It localises to the cell membrane. Functionally, calcium-dependent cell-adhesion protein involved in cells self-recognition and non-self discrimination. Thereby, it is involved in the establishment and maintenance of specific neuronal connections in the brain. The protein is Protocadherin beta-8 of Pan troglodytes (Chimpanzee).